Consider the following 92-residue polypeptide: MGLIPKLLAGLVLLTLCVENGSGQYWSYGVRPGGKRNIEPLVDSFQEMAKEIDQLAEPQHFECTLHQPRSPLRDLKGALESLMEEETGQKKI.

An N-terminal signal peptide occupies residues methionine 1–glycine 23. Pyrrolidone carboxylic acid is present on glutamine 24. Glycine 33 is modified (glycine amide).

Belongs to the GnRH family. In terms of processing, the precursor is cleaved by ACE, which removes the Gly-Lys-Arg peptide at the C-terminus, leading to mature hormone. The mature form of Gonadoliberin-1 is also cleaved and degraded by ACE.

It localises to the secreted. Functionally, stimulates the secretion of gonadotropins; it stimulates the secretion of both luteinizing and follicle-stimulating hormones. This Cavia porcellus (Guinea pig) protein is Progonadoliberin-1 (GNRH1).